A 464-amino-acid chain; its full sequence is Dihydrolipoyl dehydrogenase (464 aa).

FAD-binding positions include 33 to 41, Lys50, and Gly113; that span reads EPKYWGGVC. An intrachain disulfide couples Cys41 to Cys46. NAD(+)-binding positions include 178–182, Glu201, and 266–269; these read GAGAI and AIGF. Residues Asp309 and Ala317 each coordinate FAD. His443 functions as the Proton acceptor in the catalytic mechanism.

This sequence belongs to the class-I pyridine nucleotide-disulfide oxidoreductase family. As to quaternary structure, homodimer. Part of the PDH complex, consisting of multiple copies of AceE (E1), DlaT (E2) and Lpd (E3), and of the BCKADH complex, consisting of multiple copies of BkdA/BkdB (E1), BkdC (E2) and Lpd (E3). It depends on FAD as a cofactor.

The protein resides in the cytoplasm. The enzyme catalyses N(6)-[(R)-dihydrolipoyl]-L-lysyl-[protein] + NAD(+) = N(6)-[(R)-lipoyl]-L-lysyl-[protein] + NADH + H(+). Lipoamide dehydrogenase is a component of the alpha-ketoacid dehydrogenase complexes. Catalyzes the reoxidation of dihydrolipoyl groups which are covalently attached to the lipoate acyltransferase components (E2) of the complexes. The chain is Dihydrolipoyl dehydrogenase (lpd) from Mycobacterium bovis (strain ATCC BAA-935 / AF2122/97).